A 333-amino-acid chain; its full sequence is Protein-methionine-sulfoxide reductase catalytic subunit MsrP (333 aa).

The segment at residues 1 to 43 (MHKHRKPTEADVTPESLFYQRRRVLKALGISAAALSLPLSAQA) is a signal peptide (tat-type signal). Mo-molybdopterin-binding positions include asparagine 87, 90 to 91 (YE), cysteine 145, threonine 180, asparagine 232, arginine 237, and 248 to 250 (NIK).

It belongs to the MsrP family. As to quaternary structure, heterodimer of a catalytic subunit (MsrP) and a heme-binding subunit (MsrQ). Requires Mo-molybdopterin as cofactor. In terms of processing, predicted to be exported by the Tat system. The position of the signal peptide cleavage has not been experimentally proven.

Its subcellular location is the periplasm. It catalyses the reaction L-methionyl-[protein] + a quinone + H2O = L-methionyl-(S)-S-oxide-[protein] + a quinol. It carries out the reaction L-methionyl-[protein] + a quinone + H2O = L-methionyl-(R)-S-oxide-[protein] + a quinol. Its function is as follows. Part of the MsrPQ system that repairs oxidized periplasmic proteins containing methionine sulfoxide residues (Met-O), using respiratory chain electrons. Thus protects these proteins from oxidative-stress damage caused by reactive species of oxygen and chlorine generated by the host defense mechanisms. MsrPQ is essential for the maintenance of envelope integrity under bleach stress, rescuing a wide series of structurally unrelated periplasmic proteins from methionine oxidation. The catalytic subunit MsrP is non-stereospecific, being able to reduce both (R-) and (S-) diastereoisomers of methionine sulfoxide. The chain is Protein-methionine-sulfoxide reductase catalytic subunit MsrP from Pectobacterium atrosepticum (strain SCRI 1043 / ATCC BAA-672) (Erwinia carotovora subsp. atroseptica).